Consider the following 484-residue polypeptide: tRNA sulfurtransferase (484 aa).

The region spanning 63 to 167 (ELFAERLAHI…RDKLYMVSQR (105 aa)) is the THUMP domain. Residues 185–186 (LI), lysine 267, glycine 289, and glutamine 298 each bind ATP. The cysteines at positions 346 and 458 are disulfide-linked. Residues 406 to 484 (AAGNEVIIDI…GYNNVKVYRP (79 aa)) form the Rhodanese domain. Residue cysteine 458 is the Cysteine persulfide intermediate of the active site.

It belongs to the ThiI family.

Its subcellular location is the cytoplasm. The catalysed reaction is [ThiI sulfur-carrier protein]-S-sulfanyl-L-cysteine + a uridine in tRNA + 2 reduced [2Fe-2S]-[ferredoxin] + ATP + H(+) = [ThiI sulfur-carrier protein]-L-cysteine + a 4-thiouridine in tRNA + 2 oxidized [2Fe-2S]-[ferredoxin] + AMP + diphosphate. It catalyses the reaction [ThiS sulfur-carrier protein]-C-terminal Gly-Gly-AMP + S-sulfanyl-L-cysteinyl-[cysteine desulfurase] + AH2 = [ThiS sulfur-carrier protein]-C-terminal-Gly-aminoethanethioate + L-cysteinyl-[cysteine desulfurase] + A + AMP + 2 H(+). It participates in cofactor biosynthesis; thiamine diphosphate biosynthesis. In terms of biological role, catalyzes the ATP-dependent transfer of a sulfur to tRNA to produce 4-thiouridine in position 8 of tRNAs, which functions as a near-UV photosensor. Also catalyzes the transfer of sulfur to the sulfur carrier protein ThiS, forming ThiS-thiocarboxylate. This is a step in the synthesis of thiazole, in the thiamine biosynthesis pathway. The sulfur is donated as persulfide by IscS. The chain is tRNA sulfurtransferase from Shewanella amazonensis (strain ATCC BAA-1098 / SB2B).